Reading from the N-terminus, the 217-residue chain is Adenylate kinase (217 aa).

An ATP-binding site is contributed by 10 to 15; sequence GAGKGT. The tract at residues 30–59 is NMP; that stretch reads STGEILRAAVKSKTPMGVKAKEYMDQGALV. AMP contacts are provided by residues Thr-31, Arg-36, 57 to 59, 85 to 88, and Gln-92; these read ALV and GFPR. The segment at 126–163 is LID; the sequence is GRRVCRACGRAFHVKFDPPLVDGVCDACGGELYQRDDD. Arg-127 is a binding site for ATP. Cys-130, Cys-133, Cys-150, and Cys-153 together coordinate Zn(2+). The AMP site is built by Arg-160 and Arg-171. Glu-199 is an ATP binding site.

This sequence belongs to the adenylate kinase family. As to quaternary structure, monomer.

It localises to the cytoplasm. The enzyme catalyses AMP + ATP = 2 ADP. Its pathway is purine metabolism; AMP biosynthesis via salvage pathway; AMP from ADP: step 1/1. Functionally, catalyzes the reversible transfer of the terminal phosphate group between ATP and AMP. Plays an important role in cellular energy homeostasis and in adenine nucleotide metabolism. The chain is Adenylate kinase from Geobacter sulfurreducens (strain ATCC 51573 / DSM 12127 / PCA).